Consider the following 141-residue polypeptide: Hemoglobin subunit alpha (141 aa).

A Globin domain is found at 1-141 (VLSPADKTNV…VSTVLTSKYR (141 aa)). Residue S3 is modified to Phosphoserine. At K7 the chain carries N6-succinyllysine. Phosphothreonine is present on T8. At K11 the chain carries N6-succinyllysine. At K16 the chain carries N6-acetyllysine; alternate. K16 is subject to N6-succinyllysine; alternate. Y24 bears the Phosphotyrosine mark. Residue S35 is modified to Phosphoserine. K40 carries the N6-succinyllysine modification. S49 is modified (phosphoserine). O2 is bound at residue H58. Residue H87 coordinates heme b. S102 bears the Phosphoserine mark. T108 bears the Phosphothreonine mark. Phosphoserine is present on residues S124 and S131. A phosphothreonine mark is found at T134 and T137. At S138 the chain carries Phosphoserine.

It belongs to the globin family. Heterotetramer of two alpha chains and two beta chains. Red blood cells.

Involved in oxygen transport from the lung to the various peripheral tissues. Its function is as follows. Hemopressin acts as an antagonist peptide of the cannabinoid receptor CNR1. Hemopressin-binding efficiently blocks cannabinoid receptor CNR1 and subsequent signaling. The chain is Hemoglobin subunit alpha (HBA) from Loris tardigradus (Slender loris).